The chain runs to 347 residues: NADH-ubiquinone oxidoreductase chain 2 (347 aa).

11 helical membrane passes run 1 to 21 (MNPL…IITM), 25 to 45 (HWLT…PLIM), 59 to 79 (YFLI…INFM), 96 to 116 (TIIL…FWVP), 123 to 143 (LLST…SILY), 153 to 173 (IILA…LNQT), 178 to 198 (IMAY…IYNP), 200 to 220 (LMLL…TILI), 239 to 259 (ILMM…PLSG), 278 to 298 (ISLT…RLIY), and 325 to 345 (FLPT…MMFI).

The protein belongs to the complex I subunit 2 family. In terms of assembly, core subunit of respiratory chain NADH dehydrogenase (Complex I) which is composed of 45 different subunits. Interacts with TMEM242.

The protein resides in the mitochondrion inner membrane. The enzyme catalyses a ubiquinone + NADH + 5 H(+)(in) = a ubiquinol + NAD(+) + 4 H(+)(out). Functionally, core subunit of the mitochondrial membrane respiratory chain NADH dehydrogenase (Complex I) that is believed to belong to the minimal assembly required for catalysis. Complex I functions in the transfer of electrons from NADH to the respiratory chain. The immediate electron acceptor for the enzyme is believed to be ubiquinone. The polypeptide is NADH-ubiquinone oxidoreductase chain 2 (Oryzorictes hova (Hova rice tenrec)).